A 566-amino-acid chain; its full sequence is F-box/WD repeat-containing protein 5 (566 aa).

The region spanning 3–49 is the F-box domain; it reads EGGTPLLPDSLVYQIFLSLGPADVLAAGLVCRQWQAVSRDEFLWREQ. WD repeat units follow at residues 83 to 125, 126 to 178, 179 to 238, and 239 to 281; these read VEVQ…DLTI, SLLH…LDSF, ALLS…VKRL, and FKIQ…RIFD. Ser-151 is subject to Phosphoserine; by PLK4. A Phosphoserine modification is found at Ser-284. Residues 303 to 311 carry the D-box motif; the sequence is RHFLDRVLE. WD repeat units follow at residues 394–447, 458–501, and 502–539; these read ALDH…DLLV, RALR…RHYN, and ICLARLRHEDVVNSVVFSPQEQELLLTASDDATIKAWR.

Belongs to the FBXW5 family. As to quaternary structure, part of the SCF (SKP1-CUL1-F-box) E3 ubiquitin-protein ligase complex SCF(FBXW5) composed of CUL1, SKP1, RBX1 and FBXW5. Component of the DCX(FBXW5) E3 ubiquitin ligase complex, at least composed of (CUL4A or CUL4B), DDB1, FBXW5 and RBX1. Interacts with CDC20, EPS8, TSC1, TSC2 and SASS6. Interacts with TNFAIP8L1; TNFAIP8L1 competes with TSC2 to bind FBXW5 increasing TSC2 stability by preventing its ubiquitination. Phosphorylated at Ser-151 by PLK4 during the G1/S transition, leading to inhibit its ability to ubiquitinate SASS6. Post-translationally, ubiquitinated and degraded by the APC/C complex during mitosis and G1 phase.

It localises to the cytoplasm. It participates in protein modification; protein ubiquitination. In terms of biological role, substrate recognition component of both SCF (SKP1-CUL1-F-box protein) and DCX (DDB1-CUL4-X-box) E3 ubiquitin-protein ligase complexes. Substrate recognition component of the SCF(FBXW5) E3 ubiquitin-protein ligase complex which mediates the ubiquitination and subsequent proteasomal degradation of SASS6 during S phase, leading to prevent centriole reduplication. The SCF(FBXW5) complex also mediates ubiquitination and degradation of actin-regulator EPS8 during G2 phase, leading to the transient degradation of EPS8 and subsequent cell shape changes required to allow mitotic progression. Substrate-specific adapter of the DCX(FBXW5) E3 ubiquitin-protein ligase complex which mediates the polyubiquitination and subsequent degradation of TSC2. May also act as a negative regulator of MAP3K7/TAK1 signaling in the interleukin-1B (IL1B) signaling pathway. The chain is F-box/WD repeat-containing protein 5 (FBXW5) from Homo sapiens (Human).